The following is a 537-amino-acid chain: [Pyruvate dehydrogenase [acetyl-transferring]]-phosphatase 1, mitochondrial (537 aa).

The transit peptide at 1 to 71 (MPAPTQLFFP…WWHYTQGRRY (71 aa)) directs the protein to the mitochondrion. A PPM-type phosphatase domain is found at 109–525 (ILGFDSNQLP…DDITIIVVQF (417 aa)). 2 residues coordinate Mn(2+): D144 and G145. K202 is modified (N6-acetyllysine). 2 residues coordinate Mn(2+): D418 and D516.

This sequence belongs to the PP2C family. As to quaternary structure, heterodimer of a catalytic (PDP1) and a regulatory (PDPR) subunit. The cofactor is Mn(2+). Mg(2+) is required as a cofactor.

The protein localises to the mitochondrion. It catalyses the reaction O-phospho-L-seryl-[pyruvate dehydrogenase E1 alpha subunit] + H2O = L-seryl-[pyruvate dehydrogenase E1 alpha subunit] + phosphate. With respect to regulation, magnesium-dependent and calcium-stimulated. PDP1 activity strongly depends on its Ca(2+)-dependent binding to the lipoyl domain of E2 subunit of component of the pyruvate dehydrogenase complex. Mitochondrial enzyme that catalyzes the dephosphorylation and concomitant reactivation of the alpha subunit of the E1 component of the pyruvate dehydrogenase complex (PDC), thereby stimulating the conversion of pyruvate into acetyl-CoA. The sequence is that of [Pyruvate dehydrogenase [acetyl-transferring]]-phosphatase 1, mitochondrial (PDP1) from Pongo abelii (Sumatran orangutan).